Here is a 431-residue protein sequence, read N- to C-terminus: U-box domain-containing protein 20 (431 aa).

Residues 32-106 (TIPSQFQCPI…QGWCGSSLGG (75 aa)) form the U-box domain.

It catalyses the reaction S-ubiquitinyl-[E2 ubiquitin-conjugating enzyme]-L-cysteine + [acceptor protein]-L-lysine = [E2 ubiquitin-conjugating enzyme]-L-cysteine + N(6)-ubiquitinyl-[acceptor protein]-L-lysine.. The protein operates within protein modification; protein ubiquitination. Its function is as follows. Functions as an E3 ubiquitin ligase. This is U-box domain-containing protein 20 (PUB20) from Arabidopsis thaliana (Mouse-ear cress).